Reading from the N-terminus, the 382-residue chain is MKYELDKTSGNARRGRLVFERPQGTFSVETPAFMPVGTYGTVKGMTPEEVRATGAEILLGNTFHLWLRPGQEVMRKHGDLHDFMQWHRPILTDSGGFQVFSLGKLRKITEEGVKFQNPINGERIFLSPEKSMEIQYDLGSDIVMIFDECTPYPATFDYAKKSMEMSLRWAKRSRDRFDELGNKNALFGIIQGGVFEELRKVSLEGLVNIGFDGYAVGGLAVGEPKEDMHRILEYICPQIPADKPRYLMGVGKPEDLVEGVRRGIDMFDCVMPTRNARNGHLFVTDGIVKIRNAKYRDDTSPLDPECDCYTCKNYTKAYLYHLDKCGEILGARLNTIHNLRYYQRLMAEIRQAIEDDRFDDFVVEFYARMGKPVPPLQLADKS.

Residue Asp-93 is the Proton acceptor of the active site. Residues 93–97 (DSGGF), Asp-147, Gln-191, and Gly-218 contribute to the substrate site. Residues 249-255 (GVGKPED) are RNA binding. The Nucleophile role is filled by Asp-268. An RNA binding; important for wobble base 34 recognition region spans residues 273-277 (TRNAR). Cys-306, Cys-308, Cys-311, and His-337 together coordinate Zn(2+).

This sequence belongs to the queuine tRNA-ribosyltransferase family. Homodimer. Within each dimer, one monomer is responsible for RNA recognition and catalysis, while the other monomer binds to the replacement base PreQ1. It depends on Zn(2+) as a cofactor.

It carries out the reaction 7-aminomethyl-7-carbaguanine + guanosine(34) in tRNA = 7-aminomethyl-7-carbaguanosine(34) in tRNA + guanine. Its pathway is tRNA modification; tRNA-queuosine biosynthesis. Functionally, catalyzes the base-exchange of a guanine (G) residue with the queuine precursor 7-aminomethyl-7-deazaguanine (PreQ1) at position 34 (anticodon wobble position) in tRNAs with GU(N) anticodons (tRNA-Asp, -Asn, -His and -Tyr). Catalysis occurs through a double-displacement mechanism. The nucleophile active site attacks the C1' of nucleotide 34 to detach the guanine base from the RNA, forming a covalent enzyme-RNA intermediate. The proton acceptor active site deprotonates the incoming PreQ1, allowing a nucleophilic attack on the C1' of the ribose to form the product. After dissociation, two additional enzymatic reactions on the tRNA convert PreQ1 to queuine (Q), resulting in the hypermodified nucleoside queuosine (7-(((4,5-cis-dihydroxy-2-cyclopenten-1-yl)amino)methyl)-7-deazaguanosine). The sequence is that of Queuine tRNA-ribosyltransferase from Haemophilus influenzae (strain ATCC 51907 / DSM 11121 / KW20 / Rd).